The primary structure comprises 324 residues: Glyoxylate/hydroxypyruvate reductase B (324 aa).

Active-site residues include arginine 237 and glutamate 266. The active-site Proton donor is the histidine 285.

The protein belongs to the D-isomer specific 2-hydroxyacid dehydrogenase family. GhrB subfamily. In terms of assembly, homodimer.

The protein localises to the cytoplasm. It catalyses the reaction glycolate + NADP(+) = glyoxylate + NADPH + H(+). It carries out the reaction (R)-glycerate + NAD(+) = 3-hydroxypyruvate + NADH + H(+). The enzyme catalyses (R)-glycerate + NADP(+) = 3-hydroxypyruvate + NADPH + H(+). Functionally, catalyzes the NADPH-dependent reduction of glyoxylate and hydroxypyruvate into glycolate and glycerate, respectively. This chain is Glyoxylate/hydroxypyruvate reductase B, found in Salmonella paratyphi B (strain ATCC BAA-1250 / SPB7).